Here is a 170-residue protein sequence, read N- to C-terminus: Macro domain-containing protein VPA0103 (170 aa).

In terms of domain architecture, Macro spans 1-170; the sequence is MNAISLVQGD…SIWQHALTQH (170 aa).

It belongs to the MacroD-type family.

In Vibrio parahaemolyticus serotype O3:K6 (strain RIMD 2210633), this protein is Macro domain-containing protein VPA0103.